Here is a 662-residue protein sequence, read N- to C-terminus: Replication protein E1 (662 aa).

Over residues 28–38 the composition is skewed to basic and acidic residues; that stretch reads VDRRTGDKPSS. Residues 28–60 are disordered; it reads VDRRTGDKPSSDEDEDEDADEGEDFVDFIDDRP. Residues 39–55 show a composition bias toward acidic residues; that stretch reads DEDEDEDADEGEDFVDF. Residues 88–90 carry the Nuclear localization signal motif; that stretch reads KRK. Residues S94, S98, and S111 each carry the phosphoserine; by host modification. The Nuclear export signal signature appears at 110–119; sequence LSPRLDAIKL. The segment at 160–197 is disordered; that stretch reads TQDGRQDADEGSGRNVGGNGGQEEERAGGDGEESQTQG. The DNA-binding region stretch occupies residues 199–365; the sequence is QTDKAACGVL…QTMVGHALEE (167 aa). In terms of domain architecture, SF3 helicase spans 464-614; sequence VEFIPFLCAF…FPLTTQGEPL (151 aa). 490–497 is a binding site for ATP; the sequence is GPADTGKS. Residue K571 forms a Glycyl lysine isopeptide (Lys-Gly) (interchain with G-Cter in SUMO) linkage. Residues 637 to 662 form a disordered region; the sequence is DPDDEEENGNPSEPFRCVPGQNARTL.

It belongs to the papillomaviridae E1 protein family. In terms of assembly, can form hexamers. Interacts with E2 protein; this interaction increases E1 DNA binding specificity. Interacts with host DNA polymerase subunit POLA2. Interacts with host single stranded DNA-binding protein RPA1. Interacts with host TOP1; this interaction stimulates the enzymatic activity of TOP1. In terms of processing, phosphorylated. Post-translationally, sumoylated.

The protein resides in the host nucleus. The catalysed reaction is Couples ATP hydrolysis with the unwinding of duplex DNA by translocating in the 3'-5' direction.. The enzyme catalyses ATP + H2O = ADP + phosphate + H(+). ATP-dependent DNA 3'-5' helicase required for initiation of viral DNA replication. It forms a complex with the viral E2 protein. The E1-E2 complex binds to the replication origin which contains binding sites for both proteins. During the initial step, a dimer of E1 interacts with a dimer of protein E2 leading to a complex that binds the viral origin of replication with high specificity. Then, a second dimer of E1 displaces the E2 dimer in an ATP-dependent manner to form the E1 tetramer. Following this, two E1 monomers are added to each half of the site, which results in the formation of two E1 trimers on the viral ori. Subsequently, two hexamers will be created. The double hexamer acts as a bi-directional helicase machinery and unwinds the viral DNA and then recruits the host DNA polymerase to start replication. The chain is Replication protein E1 from Homo sapiens (Human).